Here is a 147-residue protein sequence, read N- to C-terminus: Methylmalonyl-CoA mutase homolog (147 aa).

It to methylmalonyl-CoA mutase.

The sequence is that of Methylmalonyl-CoA mutase homolog from Alkalihalophilus pseudofirmus (strain ATCC BAA-2126 / JCM 17055 / OF4) (Bacillus pseudofirmus).